Consider the following 379-residue polypeptide: UDP-N-acetylglucosamine--N-acetylmuramyl-(pentapeptide) pyrophosphoryl-undecaprenol N-acetylglucosamine transferase (379 aa).

UDP-N-acetyl-alpha-D-glucosamine-binding positions include Thr17–Gly19, Asn128, Arg169, Ser197, and Gln298.

This sequence belongs to the glycosyltransferase 28 family. MurG subfamily.

The protein localises to the cell inner membrane. It carries out the reaction di-trans,octa-cis-undecaprenyl diphospho-N-acetyl-alpha-D-muramoyl-L-alanyl-D-glutamyl-meso-2,6-diaminopimeloyl-D-alanyl-D-alanine + UDP-N-acetyl-alpha-D-glucosamine = di-trans,octa-cis-undecaprenyl diphospho-[N-acetyl-alpha-D-glucosaminyl-(1-&gt;4)]-N-acetyl-alpha-D-muramoyl-L-alanyl-D-glutamyl-meso-2,6-diaminopimeloyl-D-alanyl-D-alanine + UDP + H(+). The protein operates within cell wall biogenesis; peptidoglycan biosynthesis. Its function is as follows. Cell wall formation. Catalyzes the transfer of a GlcNAc subunit on undecaprenyl-pyrophosphoryl-MurNAc-pentapeptide (lipid intermediate I) to form undecaprenyl-pyrophosphoryl-MurNAc-(pentapeptide)GlcNAc (lipid intermediate II). This Brucella suis biovar 1 (strain 1330) protein is UDP-N-acetylglucosamine--N-acetylmuramyl-(pentapeptide) pyrophosphoryl-undecaprenol N-acetylglucosamine transferase.